A 122-amino-acid chain; its full sequence is MKKEEIIQAIKEMTVLELNELVEACEEEFGVSAAAPVAVAGAGAAAAGAAEEKTEFDVVLTDAGSEKIKVIKAVREVTGLGLKEAKALVDGAPKTLKEAASKEDGEAIKAKLEEVGAKVELK.

Belongs to the bacterial ribosomal protein bL12 family. As to quaternary structure, homodimer. Part of the ribosomal stalk of the 50S ribosomal subunit. Forms a multimeric L10(L12)X complex, where L10 forms an elongated spine to which 2 to 4 L12 dimers bind in a sequential fashion. Binds GTP-bound translation factors.

Its function is as follows. Forms part of the ribosomal stalk which helps the ribosome interact with GTP-bound translation factors. Is thus essential for accurate translation. The sequence is that of Large ribosomal subunit protein bL12 from Clostridium botulinum (strain Langeland / NCTC 10281 / Type F).